Reading from the N-terminus, the 276-residue chain is Putative pyruvate, phosphate dikinase regulatory protein 1 (276 aa).

Gly-150 to Thr-157 lines the ADP pocket.

It belongs to the pyruvate, phosphate/water dikinase regulatory protein family. PDRP subfamily.

It catalyses the reaction N(tele)-phospho-L-histidyl/L-threonyl-[pyruvate, phosphate dikinase] + ADP = N(tele)-phospho-L-histidyl/O-phospho-L-threonyl-[pyruvate, phosphate dikinase] + AMP + H(+). The enzyme catalyses N(tele)-phospho-L-histidyl/O-phospho-L-threonyl-[pyruvate, phosphate dikinase] + phosphate + H(+) = N(tele)-phospho-L-histidyl/L-threonyl-[pyruvate, phosphate dikinase] + diphosphate. In terms of biological role, bifunctional serine/threonine kinase and phosphorylase involved in the regulation of the pyruvate, phosphate dikinase (PPDK) by catalyzing its phosphorylation/dephosphorylation. The protein is Putative pyruvate, phosphate dikinase regulatory protein 1 of Syntrophomonas wolfei subsp. wolfei (strain DSM 2245B / Goettingen).